The following is a 1011-amino-acid chain: Vacuolar membrane protease (1011 aa).

The Cytoplasmic portion of the chain corresponds to 1–9; the sequence is MSNPFAFRS. A helical membrane pass occupies residues 10–30; sequence AQVTFWTTVVYLALLVPLVVI. Residues 31–378 are Vacuolar-facing; that stretch reads NEGVPPVQPD…TFVLFGLRGM (348 aa). Asparagine 50 and asparagine 106 each carry an N-linked (GlcNAc...) asparagine glycan. Zn(2+) contacts are provided by histidine 159 and aspartate 171. The active-site Proton acceptor is the glutamate 205. Zn(2+) is bound by residues glutamate 206, glutamate 231, and histidine 304. Residue asparagine 331 is glycosylated (N-linked (GlcNAc...) asparagine). A helical transmembrane segment spans residues 379 to 399; it reads FAWSLTVLIVGPLTLFGMMYL. The Cytoplasmic portion of the chain corresponds to 400–439; sequence VHKQGKGYAFHTKLRATSDSSSEDGDDEDGEVIRLGGWKG. A helical transmembrane segment spans residues 440–460; it reads FFRFPFALIVAGALVTGAALL. The Vacuolar portion of the chain corresponds to 461 to 471; the sequence is LRKMNPFIIYS. The chain crosses the membrane as a helical span at residues 472–492; the sequence is SEYAVWAMMISLFYFGFWLIM. The Cytoplasmic segment spans residues 493–505; sequence RGSSYTRPSALHR. A helical membrane pass occupies residues 506 to 526; sequence LYVHIWLFILGWVALVFATVL. At 527-536 the chain is on the vacuolar side; it reads EDRMRIASGY. The helical transmembrane segment at 537 to 557 threads the bilayer; the sequence is IFVFWESQVFLATLVAVCELF. Topologically, residues 558 to 682 are cytoplasmic; that stretch reads SLPRKIDFAR…WSGPMVTSTW (125 aa). Residues 595–609 are compositionally biased toward polar residues; it reads EATSPQRAGQSSNSP. 2 disordered regions span residues 595-627 and 650-671; these read EATS…LFRK and IMDS…EGEQ. Acidic residues predominate over residues 610–622; sequence QEDDEDDVPDEET. Residues 683–703 traverse the membrane as a helical segment; the sequence is ILQFLLLGPFMVILGGQVGLL. The Vacuolar segment spans residues 704–719; sequence LTSAVNQTGVDGSSLL. Asparagine 709 carries N-linked (GlcNAc...) asparagine glycosylation. Residues 720 to 740 traverse the membrane as a helical segment; that stretch reads APYLMIAALSAILLMPLSPFI. At 741–747 the chain is on the cytoplasmic side; the sequence is HRVTKHV. A helical transmembrane segment spans residues 748–768; that stretch reads PLFLLAVAFATLIYSLVAFPF. The Vacuolar portion of the chain corresponds to 769–1011; sequence SPRAPYKTFF…LVEGSKAFKV (243 aa). An N-linked (GlcNAc...) asparagine glycan is attached at asparagine 872.

Belongs to the peptidase M28 family. Zn(2+) serves as cofactor.

Its subcellular location is the vacuole membrane. May be involved in vacuolar sorting and osmoregulation. The sequence is that of Vacuolar membrane protease from Pyricularia oryzae (strain 70-15 / ATCC MYA-4617 / FGSC 8958) (Rice blast fungus).